A 355-amino-acid chain; its full sequence is Peptide chain release factor 1 (355 aa).

The residue at position 231 (glutamine 231) is an N5-methylglutamine. Residues 281-291 (ERLAKESEARK) show a composition bias toward basic and acidic residues. Residues 281 to 302 (ERLAKESEARKSQVGSGDRSER) are disordered.

The protein belongs to the prokaryotic/mitochondrial release factor family. Post-translationally, methylated by PrmC. Methylation increases the termination efficiency of RF1.

It localises to the cytoplasm. Functionally, peptide chain release factor 1 directs the termination of translation in response to the peptide chain termination codons UAG and UAA. This is Peptide chain release factor 1 from Campylobacter jejuni subsp. doylei (strain ATCC BAA-1458 / RM4099 / 269.97).